A 358-amino-acid polypeptide reads, in one-letter code: Protein FAM50 homolog (358 aa).

Residues Ala-104–Lys-113 show a composition bias toward basic and acidic residues. The segment at Ala-104–Glu-151 is disordered. The segment covering Asp-122–Glu-137 has biased composition (acidic residues). Basic and acidic residues predominate over residues Gly-138–Glu-151.

This sequence belongs to the FAM50 family.

In Anopheles gambiae (African malaria mosquito), this protein is Protein FAM50 homolog.